Here is a 428-residue protein sequence, read N- to C-terminus: Kynureninase (428 aa).

Pyridoxal 5'-phosphate is bound by residues threonine 104, threonine 105, 132 to 135 (FPSD), aspartate 213, histidine 216, and tyrosine 238. Lysine 239 carries the N6-(pyridoxal phosphate)lysine modification. Tryptophan 267 and threonine 295 together coordinate pyridoxal 5'-phosphate.

It belongs to the kynureninase family. As to quaternary structure, homodimer. Pyridoxal 5'-phosphate serves as cofactor.

It catalyses the reaction L-kynurenine + H2O = anthranilate + L-alanine + H(+). The catalysed reaction is 3-hydroxy-L-kynurenine + H2O = 3-hydroxyanthranilate + L-alanine + H(+). Its pathway is amino-acid degradation; L-kynurenine degradation; L-alanine and anthranilate from L-kynurenine: step 1/1. It functions in the pathway cofactor biosynthesis; NAD(+) biosynthesis; quinolinate from L-kynurenine: step 2/3. Catalyzes the cleavage of L-kynurenine (L-Kyn) and L-3-hydroxykynurenine (L-3OHKyn) into anthranilic acid (AA) and 3-hydroxyanthranilic acid (3-OHAA), respectively. The polypeptide is Kynureninase (Bacillus cereus (strain ZK / E33L)).